The sequence spans 252 residues: Imidazole glycerol phosphate synthase subunit HisF (252 aa).

Residues Asp-11 and Asp-130 contribute to the active site.

Belongs to the HisA/HisF family. In terms of assembly, heterodimer of HisH and HisF.

Its subcellular location is the cytoplasm. It catalyses the reaction 5-[(5-phospho-1-deoxy-D-ribulos-1-ylimino)methylamino]-1-(5-phospho-beta-D-ribosyl)imidazole-4-carboxamide + L-glutamine = D-erythro-1-(imidazol-4-yl)glycerol 3-phosphate + 5-amino-1-(5-phospho-beta-D-ribosyl)imidazole-4-carboxamide + L-glutamate + H(+). It participates in amino-acid biosynthesis; L-histidine biosynthesis; L-histidine from 5-phospho-alpha-D-ribose 1-diphosphate: step 5/9. In terms of biological role, IGPS catalyzes the conversion of PRFAR and glutamine to IGP, AICAR and glutamate. The HisF subunit catalyzes the cyclization activity that produces IGP and AICAR from PRFAR using the ammonia provided by the HisH subunit. The polypeptide is Imidazole glycerol phosphate synthase subunit HisF (Acinetobacter baylyi (strain ATCC 33305 / BD413 / ADP1)).